A 130-amino-acid chain; its full sequence is MSEPKDQSIEDELDAALAALDSGPLPTSTLPEPQPSPEQATAGQPPAEATAPTPAFTPPPSTGSPTLDALEENRRPKASTVCEHCPNSVWFASPAEVKCYCRVMFLVTWSSKEPNQITHCDGEFLGQEQE.

Residues methionine 1–alanine 78 are disordered. A compositionally biased stretch (low complexity) spans proline 37–proline 54.

Functionally, the initiation process of transfer DNA synthesis requires the interaction of at least three plasmid-specific components (TraH, TraI, and TraJ) at the transfer origin resulting in the assembly of a specialized nucleoprotein complex - the relaxosome. In Escherichia coli, this protein is Protein TraH (traH).